The primary structure comprises 279 residues: Shikimate dehydrogenase (NADP(+)) (279 aa).

Shikimate-binding positions include 20 to 22 (SRS) and threonine 67. The active-site Proton acceptor is lysine 71. Residue aspartate 83 participates in NADP(+) binding. Shikimate-binding residues include asparagine 92 and aspartate 108. NADP(+) contacts are provided by residues 134-138 (GAGGA) and leucine 223. A shikimate-binding site is contributed by tyrosine 225. Residue glycine 246 participates in NADP(+) binding.

Belongs to the shikimate dehydrogenase family. Homodimer.

It carries out the reaction shikimate + NADP(+) = 3-dehydroshikimate + NADPH + H(+). It functions in the pathway metabolic intermediate biosynthesis; chorismate biosynthesis; chorismate from D-erythrose 4-phosphate and phosphoenolpyruvate: step 4/7. Its function is as follows. Involved in the biosynthesis of the chorismate, which leads to the biosynthesis of aromatic amino acids. Catalyzes the reversible NADPH linked reduction of 3-dehydroshikimate (DHSA) to yield shikimate (SA). The polypeptide is Shikimate dehydrogenase (NADP(+)) (Cereibacter sphaeroides (strain KD131 / KCTC 12085) (Rhodobacter sphaeroides)).